A 173-amino-acid chain; its full sequence is NADH-ubiquinone oxidoreductase chain 6 (173 aa).

Helical transmembrane passes span 1–21 (MTYFVLFLGLCFVLGGLAVAS), 27–47 (YGVVGLVLASVAGCGWLLSLG), 48–68 (VSFVSLVLFMVYLGGMLVVFV), 87–107 (VVGYGVGFVMVLMVGMVVGGF), and 139–159 (CGVGMFLVAGWGLLLTLFVVL).

This sequence belongs to the complex I subunit 6 family.

It localises to the mitochondrion membrane. The enzyme catalyses a ubiquinone + NADH + 5 H(+)(in) = a ubiquinol + NAD(+) + 4 H(+)(out). Functionally, core subunit of the mitochondrial membrane respiratory chain NADH dehydrogenase (Complex I) that is believed to belong to the minimal assembly required for catalysis. Complex I functions in the transfer of electrons from NADH to the respiratory chain. The immediate electron acceptor for the enzyme is believed to be ubiquinone. In Aethia pusilla (Least auklet), this protein is NADH-ubiquinone oxidoreductase chain 6 (MT-ND6).